Reading from the N-terminus, the 433-residue chain is AP-2 complex subunit mu (433 aa).

The 265-residue stretch at Arg168–Arg432 folds into the MHD domain. Positions 339, 343, and 352 each coordinate a 1,2-diacyl-sn-glycero-3-phospho-(1D-myo-inositol-3,4,5-trisphosphate).

This sequence belongs to the adaptor complexes medium subunit family. Adaptor protein complex 2 (AP-2) is a heterotetramer composed of two large adaptins (alpha-type subunit and beta-type subunit), a medium adaptin (mu-type subunit) and a small adaptin (sigma-type subunit).

The protein resides in the cell membrane. The protein localises to the membrane. It localises to the coated pit. Functionally, component of the adaptor complexes which link clathrin to receptors in coated vesicles. Clathrin-associated protein complexes are believed to interact with the cytoplasmic tails of membrane proteins, leading to their selection and concentration. AP50 is a subunit of the plasma membrane adaptor. The complex binds polyphosphoinositide-containing lipids. This chain is AP-2 complex subunit mu (AP2M1), found in Gallus gallus (Chicken).